Here is a 1051-residue protein sequence, read N- to C-terminus: Carbamoyl phosphate synthase large chain (1051 aa).

The tract at residues 1-399 (MKETPKKVLV…SLQKAVRMLD (399 aa)) is carboxyphosphate synthetic domain. ATP contacts are provided by R127, R167, G173, G174, K206, L208, E213, G239, V240, H241, Q282, and E296. The ATP-grasp 1 domain maps to 131–325 (RETMIENNLP…LAYVSAKLAL (195 aa)). Q282, E296, and N298 together coordinate Mg(2+). Positions 282, 296, and 298 each coordinate Mn(2+). The oligomerization domain stretch occupies residues 400–548 (IGEPGVVGGK…LTYNGTEDDL (149 aa)). The interval 549 to 930 (EFSQGNKLLM…LKSWLSSIPN (382 aa)) is carbamoyl phosphate synthetic domain. The 191-residue stretch at 673-863 (SKLLDKLGIS…LINESMKAIF (191 aa)) folds into the ATP-grasp 2 domain. Residues R709, K748, I750, E755, G779, V780, H781, S782, Q822, and E834 each contribute to the ATP site. The Mg(2+) site is built by Q822, E834, and N836. Mn(2+) is bound by residues Q822, E834, and N836. The region spanning 930 to 1051 (NRIPNKNGIA…FEISEYGGGI (122 aa)) is the MGS-like domain. An allosteric domain region spans residues 931-1051 (RIPNKNGIAL…FEISEYGGGI (121 aa)).

It belongs to the CarB family. Composed of two chains; the small (or glutamine) chain promotes the hydrolysis of glutamine to ammonia, which is used by the large (or ammonia) chain to synthesize carbamoyl phosphate. Tetramer of heterodimers (alpha,beta)4. Mg(2+) serves as cofactor. The cofactor is Mn(2+).

It carries out the reaction hydrogencarbonate + L-glutamine + 2 ATP + H2O = carbamoyl phosphate + L-glutamate + 2 ADP + phosphate + 2 H(+). The enzyme catalyses hydrogencarbonate + NH4(+) + 2 ATP = carbamoyl phosphate + 2 ADP + phosphate + 2 H(+). It functions in the pathway amino-acid biosynthesis; L-arginine biosynthesis; carbamoyl phosphate from bicarbonate: step 1/1. Its pathway is pyrimidine metabolism; UMP biosynthesis via de novo pathway; (S)-dihydroorotate from bicarbonate: step 1/3. In terms of biological role, large subunit of the glutamine-dependent carbamoyl phosphate synthetase (CPSase). CPSase catalyzes the formation of carbamoyl phosphate from the ammonia moiety of glutamine, carbonate, and phosphate donated by ATP, constituting the first step of 2 biosynthetic pathways, one leading to arginine and/or urea and the other to pyrimidine nucleotides. The large subunit (synthetase) binds the substrates ammonia (free or transferred from glutamine from the small subunit), hydrogencarbonate and ATP and carries out an ATP-coupled ligase reaction, activating hydrogencarbonate by forming carboxy phosphate which reacts with ammonia to form carbamoyl phosphate. The sequence is that of Carbamoyl phosphate synthase large chain from Saccharolobus islandicus (strain M.16.4 / Kamchatka #3) (Sulfolobus islandicus).